A 115-amino-acid chain; its full sequence is T cell receptor beta variable 11-3 (115 aa).

Residues 1-21 (MGTRLLCWVAFCLLVEELIEA) form the signal peptide. Positions 22-115 (GVVQSPRYKI…SAVYLCASSL (94 aa)) constitute an Ig-like domain. Cys-42 and Cys-111 are disulfide-bonded.

In terms of assembly, alpha-beta TR is a heterodimer composed of an alpha and beta chain; disulfide-linked. The alpha-beta TR is associated with the transmembrane signaling CD3 coreceptor proteins to form the TR-CD3 (TcR or TCR). The assembly of alpha-beta TR heterodimers with CD3 occurs in the endoplasmic reticulum where a single alpha-beta TR heterodimer associates with one CD3D-CD3E heterodimer, one CD3G-CD3E heterodimer and one CD247 homodimer forming a stable octameric structure. CD3D-CD3E and CD3G-CD3E heterodimers preferentially associate with TR alpha and TR beta chains, respectively. The association of the CD247 homodimer is the last step of TcR assembly in the endoplasmic reticulum and is required for transport to the cell surface.

Its subcellular location is the cell membrane. V region of the variable domain of T cell receptor (TR) beta chain that participates in the antigen recognition. Alpha-beta T cell receptors are antigen specific receptors which are essential to the immune response and are present on the cell surface of T lymphocytes. Recognize peptide-major histocompatibility (MH) (pMH) complexes that are displayed by antigen presenting cells (APC), a prerequisite for efficient T cell adaptive immunity against pathogens. Binding of alpha-beta TR to pMH complex initiates TR-CD3 clustering on the cell surface and intracellular activation of LCK that phosphorylates the ITAM motifs of CD3G, CD3D, CD3E and CD247 enabling the recruitment of ZAP70. In turn ZAP70 phosphorylates LAT, which recruits numerous signaling molecules to form the LAT signalosome. The LAT signalosome propagates signal branching to three major signaling pathways, the calcium, the mitogen-activated protein kinase (MAPK) kinase and the nuclear factor NF-kappa-B (NF-kB) pathways, leading to the mobilization of transcription factors that are critical for gene expression and essential for T cell growth and differentiation. The T cell repertoire is generated in the thymus, by V-(D)-J rearrangement. This repertoire is then shaped by intrathymic selection events to generate a peripheral T cell pool of self-MH restricted, non-autoaggressive T cells. Post-thymic interaction of alpha-beta TR with the pMH complexes shapes TR structural and functional avidity. This is T cell receptor beta variable 11-3 from Homo sapiens (Human).